A 348-amino-acid chain; its full sequence is Ileal sodium/bile acid cotransporter (348 aa).

Residues 1 to 28 (MDNSSVCPPNATVCEGDSCVVPESNFNA) lie on the Extracellular side of the membrane. N-linked (GlcNAc...) asparagine glycosylation is found at asparagine 3 and asparagine 10. Residues 29 to 49 (ILNTVMSTVLTILLAMVMFSM) traverse the membrane as a helical segment. Residues 50 to 87 (GCNVEVHKFLGHIKRPWGIFVGFLCQFGIMPLTGFILS) are Cytoplasmic-facing. A helical membrane pass occupies residues 88-108 (VASGILPVQAVVVLIMGCCPG). Residues 109–126 (GTGSNILAYWIDGDMDLS) lie on the Extracellular side of the membrane. The chain crosses the membrane as a helical span at residues 127 to 147 (VSMTTCSTLLALGMMPLCLFV). At 148-157 (YTKMWVDSGT) the chain is on the cytoplasmic side. A helical membrane pass occupies residues 158–178 (IVIPYDSIGISLVALVIPVSF). The Extracellular portion of the chain corresponds to 179 to 195 (GMFVNHKWPQKAKIILK). A helical transmembrane segment spans residues 196–216 (IGSITGVILIVLIAVIGGILY). Residues 217 to 224 (QSAWIIEP) are Cytoplasmic-facing. Residues 225–245 (KLWIIGTIFPIAGYSLGFFLA) traverse the membrane as a helical segment. The Extracellular portion of the chain corresponds to 246 to 284 (RLAGQPWYRCRTVALETGMQNTQLCSTIVQLSFSPEDLN). The chain crosses the membrane as a helical span at residues 285–305 (LVFTFPLIYTVFQLVFAAVIL). At 306–348 (GIYVTYRKCYGKNDAEFLEKTDNEMDSRPSFDETNKGFQPDEK) the chain is on the cytoplasmic side. The disordered stretch occupies residues 328–348 (NEMDSRPSFDETNKGFQPDEK). A Phosphoserine modification is found at serine 335.

It belongs to the bile acid:sodium symporter (BASS) (TC 2.A.28) family. Monomer and homodimer. In terms of tissue distribution, expressed in ileum.

The protein resides in the membrane. It carries out the reaction taurocholate(out) + 2 Na(+)(out) = taurocholate(in) + 2 Na(+)(in). The catalysed reaction is cholate(out) + 2 Na(+)(out) = cholate(in) + 2 Na(+)(in). It catalyses the reaction taurochenodeoxycholate(out) + 2 Na(+)(out) = taurochenodeoxycholate(in) + 2 Na(+)(in). The enzyme catalyses tauroursodeoxycholate(out) + 2 Na(+)(out) = tauroursodeoxycholate(in) + 2 Na(+)(in). It carries out the reaction glycocholate(out) + 2 Na(+)(out) = glycocholate(in) + 2 Na(+)(in). The catalysed reaction is tauronorcholate(out) + 2 Na(+)(out) = tauronorcholate(in) + 2 Na(+)(in). It catalyses the reaction tauroallocholate(out) + 2 Na(+)(out) = tauroallocholate(in) + 2 Na(+)(in). The enzyme catalyses taurodeoxycholate(out) + 2 Na(+)(out) = taurodeoxycholate(in) + 2 Na(+)(in). It carries out the reaction tauro-beta-muricholate(out) + 2 Na(+)(out) = tauro-beta-muricholate(in) + 2 Na(+)(in). Its function is as follows. Plays a critical role in the sodium-dependent reabsorption of bile acids from the lumen of the small intestine. Transports various bile acids, unconjugated or conjugated, such as cholate and taurocholate. Also responsible for bile acid transport in the renal proximal tubules, a salvage mechanism that helps conserve bile acids. Works collaboratively with the Na(+)-taurocholate cotransporting polypeptide (NTCP), the organic solute transporter (OST), and the bile salt export pump (BSEP), to ensure efficacious biological recycling of bile acids during enterohepatic circulation. The polypeptide is Ileal sodium/bile acid cotransporter (Slc10a2) (Mus musculus (Mouse)).